The primary structure comprises 338 residues: Fructose-1,6-bisphosphatase class 1 (338 aa).

Positions 92, 114, 116, and 117 each coordinate Mg(2+). Substrate is bound by residues 117–120 and N210; that span reads DGSS. E284 contacts Mg(2+).

It belongs to the FBPase class 1 family. As to quaternary structure, homotetramer. Mg(2+) is required as a cofactor.

Its subcellular location is the cytoplasm. The catalysed reaction is beta-D-fructose 1,6-bisphosphate + H2O = beta-D-fructose 6-phosphate + phosphate. It participates in carbohydrate biosynthesis; gluconeogenesis. The chain is Fructose-1,6-bisphosphatase class 1 from Halorhodospira halophila (strain DSM 244 / SL1) (Ectothiorhodospira halophila (strain DSM 244 / SL1)).